The primary structure comprises 453 residues: MDRRIFGLENEYGVTCTFRGQRRLSPDEVARYLFRRVVSWGRSSNVFLRNGARLYLDVGSHPEYATPECDNVTELVTHDKAGERILEGLLVDAERRLHEEGIAGDVYLFKNNTDSAGNSYGCHENYLVARHGEFSRLADILIPFLVTRQLLCGAGKVLQTPRGAVYCVSQRAEHIWEGVSSATTRSRPIINTRDEPHADAERYRRLHVIVGDSNMSETTMLLKVGATDLVLRMIEAGTVMRDLTLENPIRAIREVSHDITGRRKVRLASGREASALEVQREYYEKAVDFCERRGIRTGTVERVLELWGRTLDAIEAEDLDRIGTEIDWVMKYKLLERYRAKHNMTMSHPRVAQIDLAYHDIHRRRGLYYLLEKKGQAARVANDLKIFEGKSVPPQTTRARLRGDFIRRAQEQRRDFTVDWVHLKLNDQAQRTVLCKDPFRSVDDRVEKLIAGM.

Mg(2+) is bound at residue E9. Residue R53 participates in ATP binding. Y55 lines the Mg(2+) pocket. D57 acts as the Proton acceptor in catalysis. Residue E63 participates in Mg(2+) binding. ATP-binding residues include T66 and W420.

It belongs to the Pup ligase/Pup deamidase family. Pup-conjugating enzyme subfamily.

The enzyme catalyses ATP + [prokaryotic ubiquitin-like protein]-L-glutamate + [protein]-L-lysine = ADP + phosphate + N(6)-([prokaryotic ubiquitin-like protein]-gamma-L-glutamyl)-[protein]-L-lysine.. It participates in protein degradation; proteasomal Pup-dependent pathway. Its pathway is protein modification; protein pupylation. In terms of biological role, catalyzes the covalent attachment of the prokaryotic ubiquitin-like protein modifier Pup to the proteasomal substrate proteins, thereby targeting them for proteasomal degradation. This tagging system is termed pupylation. The ligation reaction involves the side-chain carboxylate of the C-terminal glutamate of Pup and the side-chain amino group of a substrate lysine. In Streptomyces coelicolor (strain ATCC BAA-471 / A3(2) / M145), this protein is Pup--protein ligase.